A 218-amino-acid chain; its full sequence is Small ribosomal subunit protein uS3c (218 aa).

Positions 47-118 (IRRHMRSSSN…KLNIAIVKVA (72 aa)) constitute a KH type-2 domain.

This sequence belongs to the universal ribosomal protein uS3 family. Part of the 30S ribosomal subunit.

It localises to the plastid. The protein localises to the chloroplast. The sequence is that of Small ribosomal subunit protein uS3c (rps3) from Cycas taitungensis (Prince sago).